A 292-amino-acid polypeptide reads, in one-letter code: D-galactarolactone isomerase (292 aa).

It belongs to the metallo-dependent hydrolases superfamily. Does not require a metal cofactor. serves as cofactor.

The enzyme catalyses D-galactaro-1,5-lactone = D-galactaro-1,4-lactone. The protein operates within carbohydrate acid metabolism; D-galacturonate degradation via prokaryotic oxidative pathway. Functionally, catalyzes the isomerization of D-galactaro-1,5-lactone to D-galactaro-1,4-lactone. This is a step in the oxidative degradation pathway of D-galacturonate, which allows A.tumefaciens to utilize D-galacturonate as a sole carbon source. This Agrobacterium fabrum (strain C58 / ATCC 33970) (Agrobacterium tumefaciens (strain C58)) protein is D-galactarolactone isomerase.